A 138-amino-acid chain; its full sequence is Small ribosomal subunit protein uS11c (138 aa).

The disordered stretch occupies residues 1–22 (MAKSIPRISSRRNGRIGSGNNV).

This sequence belongs to the universal ribosomal protein uS11 family. Part of the 30S ribosomal subunit.

It is found in the plastid. This is Small ribosomal subunit protein uS11c from Cuscuta reflexa (Southern Asian dodder).